A 111-amino-acid chain; its full sequence is Translation initiation factor 1A (111 aa).

Basic residues predominate over residues M1–N13. The tract at residues M1–R30 is disordered. Positions I23–T96 constitute an S1-like domain.

Belongs to the eIF-1A family.

Functionally, seems to be required for maximal rate of protein biosynthesis. Enhances ribosome dissociation into subunits and stabilizes the binding of the initiator Met-tRNA(I) to 40 S ribosomal subunits. The protein is Translation initiation factor 1A of Methanosphaera stadtmanae (strain ATCC 43021 / DSM 3091 / JCM 11832 / MCB-3).